Consider the following 390-residue polypeptide: MQFAKRLEKIPPYLFAEINRKREALIAKGVDIINIGVGDPDKPTPAHILQAMREAIDDASNHNYPPYEGTQEFREAAVEWMERRFGVMDLNPNTEVVSSIGSKEAIHNTFLAFVEAGDYTLIPDPGYPVYRTSTIFAGGEAFSMPLKAENKFLPDLDLIPEEVARKAKMLWINYPNNPTGALATLEFFEELVALCQQYSILLCHDHAYSEMAYDGYKPPSVLQIPGAKDIAIEFHSLSKSYNMTGWRIGFAVGNAYAIKGLSQVKTNVDSGVFKAIQKAAIAAYATDEVELQAVMSVYQSRRDIIVKGLQSLGWPIEPPKATLYVWVPVPPGYTSTEFTTLLLDKCGIVVPPGVGYGASGEGYFRVALTISDERLHEAIQRMQDAGIRYA.

Positions 13 and 38 each coordinate substrate. Residues Tyr-67, 102-103 (SK), Tyr-127, Asn-177, Tyr-208, and 236-238 (SLS) each bind pyridoxal 5'-phosphate. Residues Lys-103, Tyr-127, and Asn-177 each coordinate substrate. At Lys-239 the chain carries N6-(pyridoxal phosphate)lysine. Pyridoxal 5'-phosphate is bound at residue Arg-247. Residue Arg-365 participates in substrate binding.

This sequence belongs to the class-I pyridoxal-phosphate-dependent aminotransferase family. LL-diaminopimelate aminotransferase subfamily. As to quaternary structure, homodimer. Pyridoxal 5'-phosphate serves as cofactor.

It catalyses the reaction (2S,6S)-2,6-diaminopimelate + 2-oxoglutarate = (S)-2,3,4,5-tetrahydrodipicolinate + L-glutamate + H2O + H(+). The protein operates within amino-acid biosynthesis; L-lysine biosynthesis via DAP pathway; LL-2,6-diaminopimelate from (S)-tetrahydrodipicolinate (aminotransferase route): step 1/1. In terms of biological role, involved in the synthesis of meso-diaminopimelate (m-DAP or DL-DAP), required for both lysine and peptidoglycan biosynthesis. Catalyzes the direct conversion of tetrahydrodipicolinate to LL-diaminopimelate. The protein is LL-diaminopimelate aminotransferase 2 of Nostoc sp. (strain PCC 7120 / SAG 25.82 / UTEX 2576).